Consider the following 211-residue polypeptide: Thymidylate kinase (211 aa).

Residue 7-14 participates in ATP binding; sequence GCEGSGKS.

It belongs to the thymidylate kinase family.

The enzyme catalyses dTMP + ATP = dTDP + ADP. Functionally, phosphorylation of dTMP to form dTDP in both de novo and salvage pathways of dTTP synthesis. The chain is Thymidylate kinase from Chlamydia abortus (strain DSM 27085 / S26/3) (Chlamydophila abortus).